Here is a 444-residue protein sequence, read N- to C-terminus: MRNIIYFILLLFSCTGYALETINIECGRADPTPIAVNKFDADTSTNNIVGHDVVKVISNDLKLSGLFHPISSASFIEDKTGIEDKPLFAAWRQINASLLVNGEVKKLESGKLKISFILWDTLLEKQLVGEILEVPENLWRRAAHKIADKIYEKITGDAGYFDTKIVYVSESSSLPKIKRIALMDYDGANNKYLTNGTSLVLTPRFARSVDKIFYVSYATKRRALIYEKDLKTGKESIVSDFAGISFAPRFSPDGRKAVMSIAKNGSTHIYEIDLATKQLHKLTDGFGINTSPSYSPDGKKIVYNSDRNGVPQLYIMNSDGSNVKRISFGGGSYAAPSWSPRGDYIAFTKITRGEDGSKTFNIGIMKAYPQDDENSERIITSGYLVESPCWSPNGRVIMFAKGWPSRAKVPGKNKIFAIDLTGHNEREIITPEDASDPEWSMVLN.

The signal sequence occupies residues 1 to 18 (MRNIIYFILLLFSCTGYA).

This sequence belongs to the TolB family. The Tol-Pal system is composed of five core proteins: the inner membrane proteins TolA, TolQ and TolR, the periplasmic protein TolB and the outer membrane protein Pal. They form a network linking the inner and outer membranes and the peptidoglycan layer.

Its subcellular location is the periplasm. In terms of biological role, part of the Tol-Pal system, which plays a role in outer membrane invagination during cell division and is important for maintaining outer membrane integrity. This chain is Tol-Pal system protein TolB, found in Rickettsia canadensis (strain McKiel).